We begin with the raw amino-acid sequence, 199 residues long: Recombination protein RecR (199 aa).

The C4-type zinc-finger motif lies at 58 to 73 (CVRCGNITNADLCGIC). Residues 81-176 (GELCVVEDVA…QVTSLAQGVP (96 aa)) form the Toprim domain.

It belongs to the RecR family.

Its function is as follows. May play a role in DNA repair. It seems to be involved in an RecBC-independent recombinational process of DNA repair. It may act with RecF and RecO. This is Recombination protein RecR from Cereibacter sphaeroides (strain ATCC 17029 / ATH 2.4.9) (Rhodobacter sphaeroides).